The primary structure comprises 403 residues: Prostaglandin E2 receptor EP1 subtype (403 aa).

Over 1-38 (MSLCGPLNLSLAGEATPCAEPGAPNASAWPPSGRASAS) the chain is Extracellular. N-linked (GlcNAc...) asparagine glycosylation is found at Asn8 and Asn25. Residues 39–65 (PALPIFSMTLGAVSNVLALALLAQAAG) form a helical membrane-spanning segment. Topologically, residues 66-75 (RLRRRRSAAT) are cytoplasmic. Residues 76–99 (FLLFVASLLATDLAGHVIPGALVL) form a helical membrane-spanning segment. Residues 100-114 (RLYAAGRSPAGGACH) lie on the Extracellular side of the membrane. A disulfide bridge links Cys113 with Cys191. A helical transmembrane segment spans residues 115–136 (FLGGCMVFFGLCPLLLGCGMAV). The Cytoplasmic portion of the chain corresponds to 137-158 (ERCVGVTRPLLHAARVSAARAR). The chain crosses the membrane as a helical span at residues 159 to 180 (LALAVLAALALAVALLPLARVG). At 181–204 (RYELQYPGTWCFIGLRPAGGWRQA) the chain is on the extracellular side. The chain crosses the membrane as a helical span at residues 205–230 (LLAGLFAGLGLAALLAALVCNTLSGL). Topologically, residues 231–295 (ALLRARWRRR…ARRARAHDVE (65 aa)) are cytoplasmic. The segment at 243 to 287 (RRRPQACGPDGRRHWGARAPRSASASSSSSVASVPGGSPGRGSAR) is disordered. The segment covering 259-278 (ARAPRSASASSSSSVASVPG) has biased composition (low complexity). A helical transmembrane segment spans residues 296 to 322 (MVGQLVGIMVVSCICWSPLLVLVVLAV). Residues 323–333 (GGWGSSSLQRP) lie on the Extracellular side of the membrane. The helical transmembrane segment at 334–355 (LFLAVRLASWNQILDPWVYILL) threads the bilayer. The Cytoplasmic segment spans residues 356 to 403 (RQAVLRQLLRLLPPRPGAKGSPAGLALTRSAWEASSLRSSRHSSLSHL).

This sequence belongs to the G-protein coupled receptor 1 family.

Its subcellular location is the cell membrane. Functionally, receptor for prostaglandin E2 (PGE2). The activity of this receptor is mediated by G(q) proteins which activate a phosphatidylinositol-calcium second messenger system. May play a role as an important modulator of renal function. Implicated the smooth muscle contractile response to PGE2 in various tissues. The protein is Prostaglandin E2 receptor EP1 subtype (PTGER1) of Canis lupus familiaris (Dog).